A 129-amino-acid polypeptide reads, in one-letter code: Succinate dehydrogenase assembly factor 3, mitochondrial (129 aa).

The transit peptide at 1 to 21 (MQVNHLLRQAVKQTTRAGRLG) directs the protein to the mitochondrion.

Belongs to the complex I LYR family. SDHAF3 subfamily. As to quaternary structure, interacts with the iron-sulfur protein subunit within the SDH catalytic dimer.

Its subcellular location is the mitochondrion matrix. Functionally, plays an essential role in the assembly of succinate dehydrogenase (SDH), an enzyme complex (also referred to as respiratory complex II) that is a component of both the tricarboxylic acid (TCA) cycle and the mitochondrial electron transport chain, and which couples the oxidation of succinate to fumarate with the reduction of ubiquinone (coenzyme Q) to ubiquinol. Promotes maturation of the iron-sulfur protein subunit of the SDH catalytic dimer, protecting it from the deleterious effects of oxidants. May act together with SDHAF1. In Kluyveromyces lactis (strain ATCC 8585 / CBS 2359 / DSM 70799 / NBRC 1267 / NRRL Y-1140 / WM37) (Yeast), this protein is Succinate dehydrogenase assembly factor 3, mitochondrial.